A 400-amino-acid chain; its full sequence is Deoxyguanosinetriphosphate triphosphohydrolase-like protein (400 aa).

The HD domain maps to Arg73 to Asn215.

The protein belongs to the dGTPase family. Type 2 subfamily.

The sequence is that of Deoxyguanosinetriphosphate triphosphohydrolase-like protein from Bartonella quintana (strain Toulouse) (Rochalimaea quintana).